The primary structure comprises 535 residues: Sodium/hydrogen exchanger 1 (535 aa).

The Cytoplasmic segment spans residues M1–S21. Residues V22–L42 form a helical membrane-spanning segment. Over E43 to R46 the chain is Vacuolar. Residues W47 to L67 traverse the membrane as a helical segment. Residues M68 to H75 are Cytoplasmic-facing. The chain crosses the membrane as a helical span at residues L76–A96. Topologically, residues G97–L114 are vacuolar. Residues F115–F135 form a helical membrane-spanning segment. At S136–R137 the chain is on the cytoplasmic side. The chain crosses the membrane as a helical span at residues M138–T158. Residues D159–P173 are Vacuolar-facing. A helical membrane pass occupies residues F174 to F194. At N195–F218 the chain is on the cytoplasmic side. The chain crosses the membrane as a helical span at residues Y219–I239. Residues K240 to Y264 lie on the Vacuolar side of the membrane. A helical membrane pass occupies residues M265–M285. Residues S286–A304 lie on the Cytoplasmic side of the membrane. The chain crosses the membrane as a helical span at residues F305 to L325. Residues D326–S344 lie on the Vacuolar side of the membrane. Residues S345–L365 traverse the membrane as a helical segment. The Cytoplasmic portion of the chain corresponds to S366 to Q381. A helical membrane pass occupies residues Q382–N402. The Vacuolar segment spans residues K403–N415. Residues A416–M436 form a helical membrane-spanning segment. At T437–R535 the chain is on the cytoplasmic side. The interval V452 to T478 is disordered. The span at S454–S469 shows a compositional bias: low complexity.

Belongs to the monovalent cation:proton antiporter 1 (CPA1) transporter (TC 2.A.36) family.

It is found in the vacuole membrane. The catalysed reaction is Na(+)(in) + H(+)(out) = Na(+)(out) + H(+)(in). It catalyses the reaction K(+)(in) + H(+)(out) = K(+)(out) + H(+)(in). Its function is as follows. Vacuolar antiporter that acts in low affinity electroneutral exchange of protons H(+) for cations such as Na(+) or K(+) across membranes. Plays important roles in the transport of Na(+) and K(+) accumulated in the cytoplasm into vacuoles, and is involved in salt stress tolerance. The chain is Sodium/hydrogen exchanger 1 from Oryza sativa subsp. japonica (Rice).